A 243-amino-acid polypeptide reads, in one-letter code: Clathrin light chain A (243 aa).

M1 is modified (blocked amino end (Met)). Disordered regions lie at residues 1–22 (MAEL…GVAG) and 49–87 (ILDG…GPTD). Positions 10–20 (PAGGPALGNGV) are enriched in gly residues. The tract at residues 95–157 (VDRLQSEPES…QLQKTKANNR (63 aa)) is involved in binding clathrin heavy chain. A phosphoserine mark is found at S100 and S201. K218 bears the N6-acetyllysine mark. S231 carries the post-translational modification Phosphoserine. Position 237 is an N6-acetyllysine (K237).

The protein belongs to the clathrin light chain family. In terms of assembly, clathrin coats are formed from molecules containing 3 heavy chains and 3 light chains. Interacts with CALY; the interaction stimulates clathrin self-assembly and clathrin-mediated endocytosis. Interacts with CKAP5 and TACC3 forming the TACC3/ch-TOG/clathrin complex located at spindle inter-microtubules bridges; the complex implicates clathrin triskelions.

It localises to the cytoplasmic vesicle membrane. The protein localises to the membrane. Its subcellular location is the coated pit. The protein resides in the cytoplasm. It is found in the cytoskeleton. It localises to the spindle. Its function is as follows. Clathrin is the major protein of the polyhedral coat of coated pits and vesicles. Acts as a component of the TACC3/ch-TOG/clathrin complex proposed to contribute to stabilization of kinetochore fibers of the mitotic spindle by acting as inter-microtubule bridge. In Bos taurus (Bovine), this protein is Clathrin light chain A (CLTA).